The sequence spans 720 residues: Probable ATP-dependent RNA helicase DHX35 (720 aa).

Positions Leu64–Ala229 constitute a Helicase ATP-binding domain. Gly77–Ser84 is an ATP binding site. Residues Asp176–His179 carry the DEAH box motif. Residues Thr261–Gly438 enclose the Helicase C-terminal domain.

It belongs to the DEAD box helicase family. DEAH subfamily. As to quaternary structure, identified in the spliceosome C complex.

The enzyme catalyses ATP + H2O = ADP + phosphate + H(+). Its function is as follows. May be involved in pre-mRNA splicing. In Pongo abelii (Sumatran orangutan), this protein is Probable ATP-dependent RNA helicase DHX35 (DHX35).